We begin with the raw amino-acid sequence, 257 residues long: Acyl-[acyl-carrier-protein]--UDP-N-acetylglucosamine O-acyltransferase (257 aa).

This sequence belongs to the transferase hexapeptide repeat family. LpxA subfamily. In terms of assembly, homotrimer.

The protein resides in the cytoplasm. The enzyme catalyses a (3R)-hydroxyacyl-[ACP] + UDP-N-acetyl-alpha-D-glucosamine = a UDP-3-O-[(3R)-3-hydroxyacyl]-N-acetyl-alpha-D-glucosamine + holo-[ACP]. The protein operates within glycolipid biosynthesis; lipid IV(A) biosynthesis; lipid IV(A) from (3R)-3-hydroxytetradecanoyl-[acyl-carrier-protein] and UDP-N-acetyl-alpha-D-glucosamine: step 1/6. Functionally, involved in the biosynthesis of lipid A, a phosphorylated glycolipid that anchors the lipopolysaccharide to the outer membrane of the cell. The chain is Acyl-[acyl-carrier-protein]--UDP-N-acetylglucosamine O-acyltransferase from Anaeromyxobacter sp. (strain Fw109-5).